The primary structure comprises 441 residues: Ribosomal protein uS12 methylthiotransferase RimO (441 aa).

The MTTase N-terminal domain occupies 8-118; it reads PKIGFVSLGC…VLEHVHHYVP (111 aa). [4Fe-4S] cluster-binding residues include C17, C53, C82, C150, C154, and C157. The region spanning 136–373 is the Radical SAM core domain; the sequence is LTPRHYAYLK…MQLQQQISAE (238 aa). The TRAM domain maps to 376–441; that stretch reads QEKVGREILV…DEYDLWGSRV (66 aa).

It belongs to the methylthiotransferase family. RimO subfamily. [4Fe-4S] cluster is required as a cofactor.

The protein resides in the cytoplasm. It carries out the reaction L-aspartate(89)-[ribosomal protein uS12]-hydrogen + (sulfur carrier)-SH + AH2 + 2 S-adenosyl-L-methionine = 3-methylsulfanyl-L-aspartate(89)-[ribosomal protein uS12]-hydrogen + (sulfur carrier)-H + 5'-deoxyadenosine + L-methionine + A + S-adenosyl-L-homocysteine + 2 H(+). Functionally, catalyzes the methylthiolation of an aspartic acid residue of ribosomal protein uS12. In Escherichia coli (strain UTI89 / UPEC), this protein is Ribosomal protein uS12 methylthiotransferase RimO.